The primary structure comprises 791 residues: Metabotropic glutamate receptor-like protein D (791 aa).

The N-terminal stretch at 1–22 is a signal peptide; it reads MKINSFLIILILLFISIKNSNG. Over 23–390 the chain is Extracellular; it reads EPEKKFKLIT…TEVYQSRPIQ (368 aa). 6 N-linked (GlcNAc...) asparagine glycosylation sites follow: asparagine 72, asparagine 168, asparagine 279, asparagine 290, asparagine 306, and asparagine 349. A helical transmembrane segment spans residues 391–411; that stretch reads IAISSISSFFIVTVLVMMGLV. Topologically, residues 412–424 are cytoplasmic; sequence VRFRKNPSIRSAS. Residues 425–445 traverse the membrane as a helical segment; the sequence is PIFLNFILFGALIIYVGIIIW. Residues 446–453 are Extracellular-facing; that stretch reads SSSINSAS. A helical transmembrane segment spans residues 454-474; the sequence is CNAQFWLVTLGFTTLIGSLVV. Residues 475-495 lie on the Cytoplasmic side of the membrane; the sequence is KNVRIWLIFDNPELKLVKITN. The chain crosses the membrane as a helical span at residues 496–516; that stretch reads LQLVPWVGVCLVINIILMSIL. The Extracellular segment spans residues 517 to 550; it reads TSVGDLREVNAQGIDSLGKYEFMRICKMNSSGAS. Asparagine 545 is a glycosylation site (N-linked (GlcNAc...) asparagine). A helical transmembrane segment spans residues 551-571; the sequence is TLYTILAYFAALLLIGVFVSW. Over 572 to 585 the chain is Cytoplasmic; sequence KIRIVDILEFNESK. The helical transmembrane segment at 586-606 threads the bilayer; sequence AIANTLYAISFCLFVIVPLMI. The Extracellular portion of the chain corresponds to 607 to 615; the sequence is SPQDKQSEK. The helical transmembrane segment at 616–636 threads the bilayer; the sequence is IILCIAGLFIVTAAVLIIFVP. Topologically, residues 637-791 are cytoplasmic; sequence KFYRVYIFGS…KNEENNDGDN (155 aa). 2 disordered regions span residues 664–715 and 746–791; these read TARA…SEPN and IITE…DGDN. Gly residues predominate over residues 674 to 689; the sequence is SSGGGAGSGGATGGSG. Positions 749-760 are enriched in low complexity; the sequence is ENGQDSNNNNNN. The stretch at 752–781 forms a coiled coil; the sequence is QDSNNNNNNEENKDNNIENNKISEEIKENL. Positions 761–785 are enriched in basic and acidic residues; sequence EENKDNNIENNKISEEIKENLKNEE.

In the N-terminal section; belongs to the BMP lipoprotein family. It in the C-terminal section; belongs to the G-protein coupled receptor 3 family. GABA-B receptor subfamily.

Its subcellular location is the membrane. This Dictyostelium discoideum (Social amoeba) protein is Metabotropic glutamate receptor-like protein D (grlD).